Here is a 345-residue protein sequence, read N- to C-terminus: Phosphate acyltransferase (345 aa).

Belongs to the PlsX family. In terms of assembly, homodimer. Probably interacts with PlsY.

It localises to the cytoplasm. The catalysed reaction is a fatty acyl-[ACP] + phosphate = an acyl phosphate + holo-[ACP]. The protein operates within lipid metabolism; phospholipid metabolism. Its function is as follows. Catalyzes the reversible formation of acyl-phosphate (acyl-PO(4)) from acyl-[acyl-carrier-protein] (acyl-ACP). This enzyme utilizes acyl-ACP as fatty acyl donor, but not acyl-CoA. The sequence is that of Phosphate acyltransferase from Nitratidesulfovibrio vulgaris (strain ATCC 29579 / DSM 644 / CCUG 34227 / NCIMB 8303 / VKM B-1760 / Hildenborough) (Desulfovibrio vulgaris).